Reading from the N-terminus, the 430-residue chain is GTPase Obg (430 aa).

The Obg domain occupies 1–158 (MFVDQVKISL…LDVSLELKLL (158 aa)). Residues 118-145 (KGGRGGRGNSRFATPRNPAPDFSEKGEP) are disordered. Residues 159-329 (ADVGLVGFPS…LLYAIADKLE (171 aa)) form the OBG-type G domain. Residues 165–172 (GFPSVGKS), 190–194 (FTTIK), 212–215 (DLPG), 282–285 (NKMD), and 310–312 (STI) contribute to the GTP site. Mg(2+)-binding residues include Ser-172 and Thr-192. The region spanning 352–430 (KHTPSQDKFT…ILGGEFEFVE (79 aa)) is the OCT domain.

The protein belongs to the TRAFAC class OBG-HflX-like GTPase superfamily. OBG GTPase family. As to quaternary structure, monomer. Mg(2+) is required as a cofactor.

Its subcellular location is the cytoplasm. Functionally, an essential GTPase which binds GTP, GDP and possibly (p)ppGpp with moderate affinity, with high nucleotide exchange rates and a fairly low GTP hydrolysis rate. Plays a role in control of the cell cycle, stress response, ribosome biogenesis and in those bacteria that undergo differentiation, in morphogenesis control. This chain is GTPase Obg, found in Staphylococcus aureus (strain Mu3 / ATCC 700698).